Consider the following 181-residue polypeptide: MRVVLLGPPGAGKGTQAVLLSEKLGVPHISTGDLFRANISQQTPLGREAQKYMDAGDLVPSDVTNRMVEARVNEPDAANGFVLDGYPRTVDQADALEKILGDMNSKLDAVLCFVVPEDTVVERMLARGRNDDTEDVIRNRMRVYREETEPLLDHYDGLVVTVDGVGEVDEVNERALRALGR.

Position 10 to 15 (10 to 15 (GAGKGT)) interacts with ATP. An NMP region spans residues 30-59 (STGDLFRANISQQTPLGREAQKYMDAGDLV). Residues threonine 31, arginine 36, 57–59 (DLV), 85–88 (GYPR), and glutamine 92 contribute to the AMP site. The tract at residues 126–132 (ARGRNDD) is LID. Residue arginine 127 participates in ATP binding. 2 residues coordinate AMP: arginine 129 and arginine 140. Glycine 166 contributes to the ATP binding site.

The protein belongs to the adenylate kinase family. Monomer.

The protein resides in the cytoplasm. The catalysed reaction is AMP + ATP = 2 ADP. The protein operates within purine metabolism; AMP biosynthesis via salvage pathway; AMP from ADP: step 1/1. Functionally, catalyzes the reversible transfer of the terminal phosphate group between ATP and AMP. Plays an important role in cellular energy homeostasis and in adenine nucleotide metabolism. The sequence is that of Adenylate kinase from Nocardia farcinica (strain IFM 10152).